Reading from the N-terminus, the 498-residue chain is ATP synthase subunit beta, chloroplastic (498 aa).

Position 6 is a phosphothreonine (Thr-6). Ser-13 carries the phosphoserine modification. 172 to 179 (GGAGVGKT) contacts ATP.

The protein belongs to the ATPase alpha/beta chains family. F-type ATPases have 2 components, CF(1) - the catalytic core - and CF(0) - the membrane proton channel. CF(1) has five subunits: alpha(3), beta(3), gamma(1), delta(1), epsilon(1). CF(0) has four main subunits: a(1), b(1), b'(1) and c(9-12).

It is found in the plastid. The protein localises to the chloroplast thylakoid membrane. The enzyme catalyses ATP + H2O + 4 H(+)(in) = ADP + phosphate + 5 H(+)(out). In terms of biological role, produces ATP from ADP in the presence of a proton gradient across the membrane. The catalytic sites are hosted primarily by the beta subunits. The chain is ATP synthase subunit beta, chloroplastic from Barbarea verna (Land cress).